The following is a 219-amino-acid chain: 7-cyano-7-deazaguanine synthase (219 aa).

10–20 (FSGGQDSTTCL) contacts ATP. Zn(2+)-binding residues include cysteine 188, cysteine 197, cysteine 200, and cysteine 203.

This sequence belongs to the QueC family. In terms of assembly, homodimer. The cofactor is Zn(2+).

The enzyme catalyses 7-carboxy-7-deazaguanine + NH4(+) + ATP = 7-cyano-7-deazaguanine + ADP + phosphate + H2O + H(+). It functions in the pathway purine metabolism; 7-cyano-7-deazaguanine biosynthesis. Its function is as follows. Catalyzes the ATP-dependent conversion of 7-carboxy-7-deazaguanine (CDG) to 7-cyano-7-deazaguanine (preQ(0)). In Clostridium botulinum (strain Kyoto / Type A2), this protein is 7-cyano-7-deazaguanine synthase.